Consider the following 147-residue polypeptide: Protein SprT-like (147 aa).

Positions 5–142 (DYVNEVSLED…SFCRGHLKEI (138 aa)) constitute a SprT-like domain. Zn(2+) is bound at residue His-64. The active site involves Glu-65. His-68 is a binding site for Zn(2+).

It belongs to the SprT family. Requires Zn(2+) as cofactor.

The protein localises to the cytoplasm. This is Protein SprT-like from Streptococcus uberis (strain ATCC BAA-854 / 0140J).